The primary structure comprises 394 residues: L-lactate dehydrogenase (394 aa).

Residues 1-380 (MIISAASDYR…SRDSLVQNAE (380 aa)) enclose the FMN hydroxy acid dehydrogenase domain. Residue Y24 coordinates substrate. FMN is bound by residues S106 and Q127. Y129 lines the substrate pocket. An FMN-binding site is contributed by T155. R164 serves as a coordination point for substrate. Position 251 (K251) interacts with FMN. The active-site Proton acceptor is the H275. R278 contacts substrate. 306–330 (DSGIRNGLDVVRMIALGADSVLLGR) lines the FMN pocket.

It belongs to the FMN-dependent alpha-hydroxy acid dehydrogenase family. It depends on FMN as a cofactor.

It localises to the cell inner membrane. The enzyme catalyses (S)-lactate + A = pyruvate + AH2. Catalyzes the conversion of L-lactate to pyruvate. Is coupled to the respiratory chain. The polypeptide is L-lactate dehydrogenase (Klebsiella pneumoniae subsp. pneumoniae (strain ATCC 700721 / MGH 78578)).